The sequence spans 287 residues: Proline iminopeptidase (287 aa).

The AB hydrolase-1 domain occupies 22–271; it reads PLVLLHGGPG…RSRHMAFIDE (250 aa). S98 (nucleophile) is an active-site residue. D238 is a catalytic residue. Residue H265 is the Proton donor of the active site.

It belongs to the peptidase S33 family.

It localises to the cell envelope. The enzyme catalyses Release of N-terminal proline from a peptide.. Its function is as follows. Releases the N-terminal proline from various substrates. The protein is Proline iminopeptidase of Lactiplantibacillus plantarum (strain ATCC BAA-793 / NCIMB 8826 / WCFS1) (Lactobacillus plantarum).